A 601-amino-acid chain; its full sequence is Proline--tRNA ligase (601 aa).

This sequence belongs to the class-II aminoacyl-tRNA synthetase family. ProS type 1 subfamily. As to quaternary structure, homodimer.

The protein localises to the cytoplasm. It carries out the reaction tRNA(Pro) + L-proline + ATP = L-prolyl-tRNA(Pro) + AMP + diphosphate. Catalyzes the attachment of proline to tRNA(Pro) in a two-step reaction: proline is first activated by ATP to form Pro-AMP and then transferred to the acceptor end of tRNA(Pro). As ProRS can inadvertently accommodate and process non-cognate amino acids such as alanine and cysteine, to avoid such errors it has two additional distinct editing activities against alanine. One activity is designated as 'pretransfer' editing and involves the tRNA(Pro)-independent hydrolysis of activated Ala-AMP. The other activity is designated 'posttransfer' editing and involves deacylation of mischarged Ala-tRNA(Pro). The misacylated Cys-tRNA(Pro) is not edited by ProRS. This chain is Proline--tRNA ligase, found in Tropheryma whipplei (strain TW08/27) (Whipple's bacillus).